The following is a 452-amino-acid chain: GTPase Der (452 aa).

EngA-type G domains are found at residues 4–169 (PIVA…PPPE) and 177–352 (IKVA…EEHR). GTP-binding positions include 10-17 (GRPNVGKS), 57-61 (DTGGL), 120-123 (NKCE), 183-190 (GRPNVGKS), 230-234 (DTAGI), and 295-298 (NKWD). The region spanning 353–438 (RRVTTAVINE…PIRLLWRGKK (86 aa)) is the KH-like domain.

This sequence belongs to the TRAFAC class TrmE-Era-EngA-EngB-Septin-like GTPase superfamily. EngA (Der) GTPase family. Associates with the 50S ribosomal subunit.

Its function is as follows. GTPase that plays an essential role in the late steps of ribosome biogenesis. The protein is GTPase Der of Rippkaea orientalis (strain PCC 8801 / RF-1) (Cyanothece sp. (strain PCC 8801)).